The chain runs to 379 residues: Lipid-A-disaccharide synthase (379 aa).

The protein belongs to the LpxB family.

It carries out the reaction a lipid X + a UDP-2-N,3-O-bis[(3R)-3-hydroxyacyl]-alpha-D-glucosamine = a lipid A disaccharide + UDP + H(+). It functions in the pathway bacterial outer membrane biogenesis; LPS lipid A biosynthesis. In terms of biological role, condensation of UDP-2,3-diacylglucosamine and 2,3-diacylglucosamine-1-phosphate to form lipid A disaccharide, a precursor of lipid A, a phosphorylated glycolipid that anchors the lipopolysaccharide to the outer membrane of the cell. The protein is Lipid-A-disaccharide synthase of Pseudomonas fluorescens (strain SBW25).